The primary structure comprises 225 residues: NAD(P)H-quinone oxidoreductase subunit K, chloroplastic (225 aa).

[4Fe-4S] cluster contacts are provided by Cys-43, Cys-44, Cys-108, and Cys-139.

The protein belongs to the complex I 20 kDa subunit family. As to quaternary structure, NDH is composed of at least 16 different subunits, 5 of which are encoded in the nucleus. [4Fe-4S] cluster is required as a cofactor.

The protein resides in the plastid. Its subcellular location is the chloroplast thylakoid membrane. The catalysed reaction is a plastoquinone + NADH + (n+1) H(+)(in) = a plastoquinol + NAD(+) + n H(+)(out). It carries out the reaction a plastoquinone + NADPH + (n+1) H(+)(in) = a plastoquinol + NADP(+) + n H(+)(out). Its function is as follows. NDH shuttles electrons from NAD(P)H:plastoquinone, via FMN and iron-sulfur (Fe-S) centers, to quinones in the photosynthetic chain and possibly in a chloroplast respiratory chain. The immediate electron acceptor for the enzyme in this species is believed to be plastoquinone. Couples the redox reaction to proton translocation, and thus conserves the redox energy in a proton gradient. This Dioscorea elephantipes (Elephant's foot yam) protein is NAD(P)H-quinone oxidoreductase subunit K, chloroplastic.